A 918-amino-acid chain; its full sequence is Non-lysosomal glucosylceramidase (918 aa).

The disordered stretch occupies residues 886 to 918; the sequence is HKKSRRPSVTQGTGLSTQPECGPKRSLANLNSE. Residues 892 to 904 show a composition bias toward polar residues; sequence PSVTQGTGLSTQP. Ser-893 is subject to Phosphoserine.

Belongs to the non-lysosomal glucosylceramidase family. In terms of tissue distribution, widely expressed at low level. Highly expressed in testis and brain. Ubiquitously expressed in the brain (at protein level). Expressed by Sertoli cells (at protein level).

The protein localises to the endoplasmic reticulum membrane. The protein resides in the golgi apparatus membrane. The catalysed reaction is a beta-D-glucosyl-(1&lt;-&gt;1')-N-acylsphing-4-enine + H2O = an N-acylsphing-4-enine + D-glucose. It catalyses the reaction a beta-D-galactosyl-(1&lt;-&gt;1')-N-acylsphing-4-enine + H2O = an N-acylsphing-4-enine + D-galactose. The enzyme catalyses beta-D-glucosyl-(1-&gt;3)-O-lithocholate + H2O = lithocholate + D-glucose. It carries out the reaction beta-D-glucosyl-(1-&gt;3)-O-chenodeoxycholate + H2O = chenodeoxycholate + D-glucose. The catalysed reaction is a di-trans,poly-cis-dolichyl beta-D-glucosyl phosphate + chenodeoxycholate = beta-D-glucosyl-(1-&gt;3)-O-chenodeoxycholate + a di-trans,poly-cis-dolichyl phosphate + H(+). It catalyses the reaction octyl beta-D-glucose + chenodeoxycholate = beta-D-glucosyl-(1-&gt;3)-O-chenodeoxycholate + octan-1-ol. The enzyme catalyses cholesteryl 3-beta-D-glucoside + H2O = cholesterol + D-glucose. It carries out the reaction a beta-D-glucosyl-(1&lt;-&gt;1')-N-acylsphing-4-enine + cholesterol = cholesteryl 3-beta-D-glucoside + an N-acylsphing-4-enine. The catalysed reaction is beta-D-glucosyl-N-(9Z-octadecenoyl)-sphing-4E-enine + cholesterol = N-(9Z-octadecenoyl)-sphing-4-enine + cholesteryl 3-beta-D-glucoside. It catalyses the reaction a beta-D-galactosyl-(1&lt;-&gt;1')-N-acylsphing-4-enine + cholesterol = cholesteryl 3-beta-D-galactoside + an N-acylsphing-4-enine. The enzyme catalyses 1-(beta-D-galactosyl)-N-dodecanoylsphing-4-enine + cholesterol = cholesteryl 3-beta-D-galactoside + N-dodecanoylsphing-4-enine. Its pathway is lipid metabolism; sphingolipid metabolism. It functions in the pathway steroid metabolism; cholesterol metabolism. Its activity is regulated as follows. Enzymatic activity is dependent on membrane association and requires the presence of lipids. Inhibited by N-(adamantanemethyloxypentyl)-deoxynojirimycin/AMP-DNM. Inhibited by its product sphingosine/N-acylsphing-4-enine in a feedback loop. Also inhibited by other non-acetylated sphingoid bases and their derivatives but not by sphingosine-1-phosphate and complex sphingolipids. Functionally, non-lysosomal glucosylceramidase that catalyzes the hydrolysis of glucosylceramides/GlcCers (such as beta-D-glucosyl-(1&lt;-&gt;1')-N-acylsphing-4-enine) to free glucose and ceramides (such as N-acylsphing-4-enine). GlcCers are membrane glycosphingolipids that have a wide intracellular distribution. They are the main precursors of more complex glycosphingolipids that play a role in cellular growth, differentiation, adhesion, signaling, cytoskeletal dynamics and membrane properties. Also involved in the transglucosylation of cholesterol, transferring glucose from GlcCer, thereby modifying its water solubility and biological properties. Under specific conditions, may catalyze the reverse reaction, transferring glucose from cholesteryl-3-beta-D-glucoside to ceramide (such as N-acylsphing-4-enine). May play a role in the metabolism of bile acids. Able to hydrolyze bile acid 3-O-glucosides as well as to produce bile acid-glucose conjugates thanks to a bile acid glucosyl transferase activity. Catalyzes the hydrolysis of galactosylceramides/GalCers (such as beta-D-galactosyl-(1&lt;-&gt;1')-N-acylsphing-4-enine), as well as galactosyl transfer between GalCers and cholesterol in vitro with lower activity compared with their activity against GlcCers. In Mus musculus (Mouse), this protein is Non-lysosomal glucosylceramidase.